Here is a 725-residue protein sequence, read N- to C-terminus: Glyoxysomal fatty acid beta-oxidation multifunctional protein MFP-a (725 aa).

The Nucleophile role is filled by Glu-119. Glu-139 (proton acceptor) is an active-site residue. The Microbody targeting signal motif lies at 723 to 725 (SRL).

This sequence in the N-terminal section; belongs to the enoyl-CoA hydratase/isomerase family. The protein in the central section; belongs to the 3-hydroxyacyl-CoA dehydrogenase family.

Its subcellular location is the glyoxysome. It catalyses the reaction a (3S)-3-hydroxyacyl-CoA = a (2E)-enoyl-CoA + H2O. It carries out the reaction a 4-saturated-(3S)-3-hydroxyacyl-CoA = a (3E)-enoyl-CoA + H2O. The catalysed reaction is a (3Z)-enoyl-CoA = a 4-saturated (2E)-enoyl-CoA. The enzyme catalyses a (3E)-enoyl-CoA = a 4-saturated (2E)-enoyl-CoA. It catalyses the reaction (3S)-3-hydroxybutanoyl-CoA = (3R)-3-hydroxybutanoyl-CoA. It carries out the reaction a (3S)-3-hydroxyacyl-CoA + NAD(+) = a 3-oxoacyl-CoA + NADH + H(+). Its pathway is lipid metabolism; fatty acid beta-oxidation. The chain is Glyoxysomal fatty acid beta-oxidation multifunctional protein MFP-a from Brassica napus (Rape).